The sequence spans 132 residues: RING-H2 finger protein ATL39 (132 aa).

A helical transmembrane segment spans residues 10-30 (TIVFAFASIGFIAFYIINYYI). The RING-type; atypical zinc finger occupies 85 to 127 (CVVCLNEFKDDETLRLVPPCVHVFHADCVDIWLSHSSTCPICR).

This sequence belongs to the RING-type zinc finger family. ATL subfamily.

It localises to the membrane. It carries out the reaction S-ubiquitinyl-[E2 ubiquitin-conjugating enzyme]-L-cysteine + [acceptor protein]-L-lysine = [E2 ubiquitin-conjugating enzyme]-L-cysteine + N(6)-ubiquitinyl-[acceptor protein]-L-lysine.. It participates in protein modification; protein ubiquitination. In Arabidopsis thaliana (Mouse-ear cress), this protein is RING-H2 finger protein ATL39 (ATL39).